A 352-amino-acid chain; its full sequence is Anthranilate phosphoribosyltransferase (352 aa).

Residues Gly-82, 85–86 (GD), Ser-90, 92–95 (NIST), 110–118 (KHGNRAVTG), and Gly-122 contribute to the 5-phospho-alpha-D-ribose 1-diphosphate site. Gly-82 provides a ligand contact to anthranilate. Ser-94 contributes to the Mg(2+) binding site. Asn-113 serves as a coordination point for anthranilate. Residue Arg-168 participates in anthranilate binding. Asp-232 and Glu-233 together coordinate Mg(2+).

This sequence belongs to the anthranilate phosphoribosyltransferase family. As to quaternary structure, homodimer. Requires Mg(2+) as cofactor.

The catalysed reaction is N-(5-phospho-beta-D-ribosyl)anthranilate + diphosphate = 5-phospho-alpha-D-ribose 1-diphosphate + anthranilate. Its pathway is amino-acid biosynthesis; L-tryptophan biosynthesis; L-tryptophan from chorismate: step 2/5. Functionally, catalyzes the transfer of the phosphoribosyl group of 5-phosphorylribose-1-pyrophosphate (PRPP) to anthranilate to yield N-(5'-phosphoribosyl)-anthranilate (PRA). This Methanothermobacter thermautotrophicus (strain ATCC 29096 / DSM 1053 / JCM 10044 / NBRC 100330 / Delta H) (Methanobacterium thermoautotrophicum) protein is Anthranilate phosphoribosyltransferase.